The chain runs to 79 residues: MESIEQRVKKIVAEQLGVNEAEIKNESSFLDDLGADSLDMVELVMALEDEFETEIPDEEAEKITTVQQAIDYINSHGKQ.

One can recognise a Carrier domain in the interval 2–77 (ESIEQRVKKI…QAIDYINSHG (76 aa)). The residue at position 37 (S37) is an O-(pantetheine 4'-phosphoryl)serine.

This sequence belongs to the acyl carrier protein (ACP) family. Post-translationally, 4'-phosphopantetheine is transferred from CoA to a specific serine of apo-ACP by AcpS. This modification is essential for activity because fatty acids are bound in thioester linkage to the sulfhydryl of the prosthetic group.

The protein resides in the cytoplasm. The protein operates within lipid metabolism; fatty acid biosynthesis. Carrier of the growing fatty acid chain in fatty acid biosynthesis. This is Acyl carrier protein from Bordetella avium (strain 197N).